The following is a 390-amino-acid chain: S-adenosylmethionine synthase 3 (390 aa).

Glu-9 serves as a coordination point for Mg(2+). His-15 is a binding site for ATP. Position 43 (Glu-43) interacts with K(+). Glu-56 and Gln-99 together coordinate L-methionine. Residues 167 to 169 (DGK), 235 to 238 (SGRF), Asp-246, 252 to 253 (RK), Ala-269, Lys-273, and Lys-277 each bind ATP. Asp-246 is a binding site for L-methionine. An L-methionine-binding site is contributed by Lys-277.

Belongs to the AdoMet synthase family. As to quaternary structure, homotetramer. Mn(2+) serves as cofactor. It depends on Mg(2+) as a cofactor. Co(2+) is required as a cofactor. Requires K(+) as cofactor. Mostly expressed in stems and leaves.

Its subcellular location is the cytoplasm. It carries out the reaction L-methionine + ATP + H2O = S-adenosyl-L-methionine + phosphate + diphosphate. Its pathway is amino-acid biosynthesis; S-adenosyl-L-methionine biosynthesis; S-adenosyl-L-methionine from L-methionine: step 1/1. Catalyzes the formation of S-adenosylmethionine from methionine and ATP. The reaction comprises two steps that are both catalyzed by the same enzyme: formation of S-adenosylmethionine (AdoMet) and triphosphate, and subsequent hydrolysis of the triphosphate. This chain is S-adenosylmethionine synthase 3 (SAM3), found in Solanum lycopersicum (Tomato).